A 121-amino-acid chain; its full sequence is Large ribosomal subunit protein uL18 (121 aa).

Belongs to the universal ribosomal protein uL18 family. In terms of assembly, part of the 50S ribosomal subunit; part of the 5S rRNA/L5/L18/L25 subcomplex. Contacts the 5S and 23S rRNAs.

Functionally, this is one of the proteins that bind and probably mediate the attachment of the 5S RNA into the large ribosomal subunit, where it forms part of the central protuberance. In Albidiferax ferrireducens (strain ATCC BAA-621 / DSM 15236 / T118) (Rhodoferax ferrireducens), this protein is Large ribosomal subunit protein uL18.